An 89-amino-acid polypeptide reads, in one-letter code: Small ribosomal subunit protein uS17 (89 aa).

The protein belongs to the universal ribosomal protein uS17 family. In terms of assembly, part of the 30S ribosomal subunit.

In terms of biological role, one of the primary rRNA binding proteins, it binds specifically to the 5'-end of 16S ribosomal RNA. The chain is Small ribosomal subunit protein uS17 from Leptospira interrogans serogroup Icterohaemorrhagiae serovar Lai (strain 56601).